The primary structure comprises 32 residues: Delta-conotoxin EVIA (32 aa).

3 disulfide bridges follow: C3–C21, C10–C25, and C20–C29. 4-hydroxyproline is present on P6. L32 is subject to Leucine amide.

Belongs to the conotoxin O1 superfamily. As to expression, expressed by the venom duct.

Its subcellular location is the secreted. Its function is as follows. Delta-conotoxins bind to site 6 of voltage-gated sodium channels and inhibit the inactivation process. This toxin inhibits sodium channel inactivation in neuronal membranes from amphibians and mammals (Nav1.2a/SCN1A, Nav1.3/SCN3A and Nav1.6/SCN8A) upon binding to receptor site 6. The chain is Delta-conotoxin EVIA from Conus ermineus (Agate cone).